The sequence spans 135 residues: Protein PsiE homolog (135 aa).

4 helical membrane passes run 14–34 (LQTI…IFLV), 54–74 (YQLI…ALIV), 82–102 (HFPL…LIIV), and 107–127 (PSDT…LYLA).

Belongs to the PsiE family.

The protein resides in the cell inner membrane. The protein is Protein PsiE homolog of Pectobacterium atrosepticum (strain SCRI 1043 / ATCC BAA-672) (Erwinia carotovora subsp. atroseptica).